We begin with the raw amino-acid sequence, 444 residues long: Tol-Pal system protein TolB (444 aa).

A signal peptide spans 1-19; that stretch reads MRNIIYFILSLLFSVTSYA.

The protein belongs to the TolB family. The Tol-Pal system is composed of five core proteins: the inner membrane proteins TolA, TolQ and TolR, the periplasmic protein TolB and the outer membrane protein Pal. They form a network linking the inner and outer membranes and the peptidoglycan layer.

It localises to the periplasm. Part of the Tol-Pal system, which plays a role in outer membrane invagination during cell division and is important for maintaining outer membrane integrity. The polypeptide is Tol-Pal system protein TolB (Rickettsia rickettsii (strain Iowa)).